A 435-amino-acid polypeptide reads, in one-letter code: Serine hydroxymethyltransferase 2 (435 aa).

(6S)-5,6,7,8-tetrahydrofolate contacts are provided by residues Leu135 and 139–141 (GHL). Lys244 is modified (N6-(pyridoxal phosphate)lysine). Glu260 contributes to the (6S)-5,6,7,8-tetrahydrofolate binding site.

It belongs to the SHMT family. As to quaternary structure, homodimer. Pyridoxal 5'-phosphate is required as a cofactor.

The protein resides in the cytoplasm. The enzyme catalyses (6R)-5,10-methylene-5,6,7,8-tetrahydrofolate + glycine + H2O = (6S)-5,6,7,8-tetrahydrofolate + L-serine. The protein operates within one-carbon metabolism; tetrahydrofolate interconversion. Its pathway is amino-acid biosynthesis; glycine biosynthesis; glycine from L-serine: step 1/1. Its function is as follows. Catalyzes the reversible interconversion of serine and glycine with tetrahydrofolate (THF) serving as the one-carbon carrier. This reaction serves as the major source of one-carbon groups required for the biosynthesis of purines, thymidylate, methionine, and other important biomolecules. Also exhibits THF-independent aldolase activity toward beta-hydroxyamino acids, producing glycine and aldehydes, via a retro-aldol mechanism. This is Serine hydroxymethyltransferase 2 from Vibrio cholerae serotype O1 (strain ATCC 39315 / El Tor Inaba N16961).